The primary structure comprises 260 residues: uncharacterized protein (260 aa).

The 159-residue stretch at 8 to 166 folds into the PNPLA domain; it reads LALGSGGARG…VDRIPVSVVK (159 aa). Positions 39–43 match the GXSXG motif; it reads GSSMG. Ser-41 functions as the Nucleophile in the catalytic mechanism. The active-site Proton acceptor is the Asp-153. Positions 153 to 155 match the DGA/G motif; the sequence is DGA.

Belongs to the NTE family.

This is an uncharacterized protein from Bacillus subtilis (strain 168).